The sequence spans 293 residues: Protease HtpX (293 aa).

A run of 2 helical transmembrane segments spans residues 4-24 (IALF…VLSL) and 34-54 (GLMI…LLMS). Histidine 139 lines the Zn(2+) pocket. The active site involves glutamate 140. Residue histidine 143 participates in Zn(2+) binding. 2 helical membrane-spanning segments follow: residues 158-178 (VVNT…AGFL) and 193-213 (MVYF…ASII). Glutamate 222 lines the Zn(2+) pocket.

The protein belongs to the peptidase M48B family. Zn(2+) is required as a cofactor.

The protein localises to the cell inner membrane. The protein is Protease HtpX of Yersinia pseudotuberculosis serotype O:1b (strain IP 31758).